The sequence spans 235 residues: 2,3,4,5-tetrahydropyridine-2,6-dicarboxylate N-acetyltransferase (235 aa).

This sequence belongs to the transferase hexapeptide repeat family. DapH subfamily.

It carries out the reaction (S)-2,3,4,5-tetrahydrodipicolinate + acetyl-CoA + H2O = L-2-acetamido-6-oxoheptanedioate + CoA. The protein operates within amino-acid biosynthesis; L-lysine biosynthesis via DAP pathway; LL-2,6-diaminopimelate from (S)-tetrahydrodipicolinate (acetylase route): step 1/3. In terms of biological role, catalyzes the transfer of an acetyl group from acetyl-CoA to tetrahydrodipicolinate. This chain is 2,3,4,5-tetrahydropyridine-2,6-dicarboxylate N-acetyltransferase, found in Anoxybacillus flavithermus (strain DSM 21510 / WK1).